Reading from the N-terminus, the 725-residue chain is FYVE, RhoGEF and PH domain-containing protein 3 (725 aa).

Positions 1–151 (MESGRGSSTP…KADKDAGLAQ (151 aa)) are disordered. Residues 124-136 (EEADSDVGEEPDS) are compositionally biased toward acidic residues. Serine 128 bears the Phosphoserine mark. Residues 157–341 (KLLHIAQELL…STAANHSNAA (185 aa)) form the DH domain. The region spanning 370-469 (ELIKEGQIQK…WIQIIQATIE (100 aa)) is the PH 1 domain. Residues 487–532 (QDEDPSLSPDMPITSTSPVEPVVTTEGSSGAAGLEPRKLSSKTRRD) are disordered. The segment covering 500–512 (TSTSPVEPVVTTE) has biased composition (low complexity). The segment covering 521 to 532 (EPRKLSSKTRRD) has biased composition (basic and acidic residues). The segment at 532 to 588 (DKEKQSCKSCGETFNSITKRRHHCKLCGAVICGKCSEFKAENSRQSRVCRDCFLTQP) adopts an FYVE-type zinc-finger fold. The Zn(2+) site is built by cysteine 538, cysteine 541, cysteine 555, cysteine 558, cysteine 563, cysteine 566, cysteine 580, and cysteine 583. One can recognise a PH 2 domain in the interval 604 to 703 (PSLLCGPLRL…WLETLSTAAH (100 aa)). The tract at residues 703–725 (HGDTAQDSPGALQLQVPMGAAAP) is disordered.

Its subcellular location is the cytoplasm. It is found in the cytoskeleton. Promotes the formation of filopodia. May activate CDC42, a member of the Ras-like family of Rho- and Rac proteins, by exchanging bound GDP for free GTP. Plays a role in regulating the actin cytoskeleton and cell shape. The chain is FYVE, RhoGEF and PH domain-containing protein 3 (FGD3) from Homo sapiens (Human).